The primary structure comprises 310 residues: Ribosomal RNA small subunit methyltransferase H (310 aa).

S-adenosyl-L-methionine is bound by residues 47–49 (GGH), aspartate 66, phenylalanine 93, aspartate 108, and glutamine 115. Residues 275-310 (RKPFMASEQEQADNPRSRSAKLRIARRRPDTARSGP) are disordered. Residues 301-310 (RRPDTARSGP) are compositionally biased toward basic and acidic residues.

Belongs to the methyltransferase superfamily. RsmH family.

The protein localises to the cytoplasm. It carries out the reaction cytidine(1402) in 16S rRNA + S-adenosyl-L-methionine = N(4)-methylcytidine(1402) in 16S rRNA + S-adenosyl-L-homocysteine + H(+). In terms of biological role, specifically methylates the N4 position of cytidine in position 1402 (C1402) of 16S rRNA. The polypeptide is Ribosomal RNA small subunit methyltransferase H (Synechococcus sp. (strain CC9311)).